Reading from the N-terminus, the 325-residue chain is N-acetyl-gamma-glutamyl-phosphate reductase (325 aa).

Residue Cys-135 is part of the active site.

The protein belongs to the NAGSA dehydrogenase family. Type 1 subfamily.

Its subcellular location is the cytoplasm. It carries out the reaction N-acetyl-L-glutamate 5-semialdehyde + phosphate + NADP(+) = N-acetyl-L-glutamyl 5-phosphate + NADPH + H(+). It functions in the pathway amino-acid biosynthesis; L-arginine biosynthesis; N(2)-acetyl-L-ornithine from L-glutamate: step 3/4. In terms of biological role, catalyzes the NADPH-dependent reduction of N-acetyl-5-glutamyl phosphate to yield N-acetyl-L-glutamate 5-semialdehyde. The protein is N-acetyl-gamma-glutamyl-phosphate reductase of Flavobacterium johnsoniae (strain ATCC 17061 / DSM 2064 / JCM 8514 / BCRC 14874 / CCUG 350202 / NBRC 14942 / NCIMB 11054 / UW101) (Cytophaga johnsonae).